The primary structure comprises 1011 residues: Ankyrin repeat domain-containing protein 18B (1011 aa).

5 ANK repeats span residues 67–96 (KDRT…QINI), 100–129 (LNRT…NPNI), 133–162 (YGNT…NIEA), 166–195 (EGNT…NIHA), and 199–228 (FKRT…HISS). 2 disordered regions span residues 264-330 (LRND…GKKK) and 533-554 (MHPN…SEER). 4 coiled-coil regions span residues 277 to 319 (ENLK…ENKQ), 385 to 639 (NEEM…ELVD), 692 to 722 (ISLL…CLEM), and 752 to 908 (FKKL…EAFA). Basic residues predominate over residues 280–293 (KKRKKRKKLKKRKE). A compositionally biased stretch (basic and acidic residues) spans 294–319 (GAKAEHNLKVASEEKQERLERSENKQ).

The chain is Ankyrin repeat domain-containing protein 18B (ANKRD18B) from Homo sapiens (Human).